The chain runs to 160 residues: Major strawberry allergen Fra a 1.08 (160 aa).

The protein belongs to the BetVI family. Phosphorylated in vivo. Phosphorylation prevents its activity as ribonuclease. As to expression, highly expressed in roots. Expressed a low levels in ripe red fruits.

In terms of biological role, possesses ribonuclease activity in vitro. This is Major strawberry allergen Fra a 1.08 from Fragaria ananassa (Strawberry).